The sequence spans 33 residues: Large ribosomal subunit protein eL28 (33 aa).

The protein belongs to the eukaryotic ribosomal protein eL28 family. Component of the large ribosomal subunit.

Its subcellular location is the cytoplasm. In terms of biological role, component of the large ribosomal subunit. The ribosome is a large ribonucleoprotein complex responsible for the synthesis of proteins in the cell. In Xenopus laevis (African clawed frog), this protein is Large ribosomal subunit protein eL28 (rpl28).